A 121-amino-acid chain; its full sequence is Phosphoribosyl-AMP cyclohydrolase (121 aa).

Asp74 is a binding site for Mg(2+). Cys75 contributes to the Zn(2+) binding site. Mg(2+)-binding residues include Asp76 and Asp78. The Zn(2+) site is built by Cys91 and Cys98.

Belongs to the PRA-CH family. Homodimer. Requires Mg(2+) as cofactor. The cofactor is Zn(2+).

It is found in the cytoplasm. The catalysed reaction is 1-(5-phospho-beta-D-ribosyl)-5'-AMP + H2O = 1-(5-phospho-beta-D-ribosyl)-5-[(5-phospho-beta-D-ribosylamino)methylideneamino]imidazole-4-carboxamide. It functions in the pathway amino-acid biosynthesis; L-histidine biosynthesis; L-histidine from 5-phospho-alpha-D-ribose 1-diphosphate: step 3/9. In terms of biological role, catalyzes the hydrolysis of the adenine ring of phosphoribosyl-AMP. This chain is Phosphoribosyl-AMP cyclohydrolase, found in Methanothrix thermoacetophila (strain DSM 6194 / JCM 14653 / NBRC 101360 / PT) (Methanosaeta thermophila).